A 145-amino-acid polypeptide reads, in one-letter code: Small ribosomal subunit protein uS19 (145 aa).

This sequence belongs to the universal ribosomal protein uS19 family. In terms of assembly, component of the small ribosomal subunit.

Its subcellular location is the cytoplasm. Its function is as follows. Component of the small ribosomal subunit. The ribosome is a large ribonucleoprotein complex responsible for the synthesis of proteins in the cell. The protein is Small ribosomal subunit protein uS19 (rps15) of Xenopus laevis (African clawed frog).